The sequence spans 139 residues: Putative pre-16S rRNA nuclease (139 aa).

This sequence belongs to the YqgF nuclease family.

It localises to the cytoplasm. In terms of biological role, could be a nuclease involved in processing of the 5'-end of pre-16S rRNA. This Streptococcus thermophilus (strain CNRZ 1066) protein is Putative pre-16S rRNA nuclease.